The primary structure comprises 70 residues: DNA-directed RNA polymerase subunit epsilon (70 aa).

The protein belongs to the RNA polymerase subunit epsilon family. As to quaternary structure, RNAP is composed of a core of 2 alpha, a beta and a beta' subunit. The core is associated with a delta subunit, and at least one of epsilon or omega. When a sigma factor is associated with the core the holoenzyme is formed, which can initiate transcription.

It carries out the reaction RNA(n) + a ribonucleoside 5'-triphosphate = RNA(n+1) + diphosphate. In terms of biological role, a non-essential component of RNA polymerase (RNAP). The polypeptide is DNA-directed RNA polymerase subunit epsilon (Bacillus cereus (strain ATCC 14579 / DSM 31 / CCUG 7414 / JCM 2152 / NBRC 15305 / NCIMB 9373 / NCTC 2599 / NRRL B-3711)).